Consider the following 287-residue polypeptide: Probable glucose uptake protein GlcU (287 aa).

9 helical membrane passes run 7 to 29 (LIAL…VGGG), 34 to 56 (IRGT…HAAF), 58 to 75 (NLTV…WAFG), 114 to 136 (WSTI…GISL), 156 to 178 (MGIL…IFGV), 183 to 202 (ALFF…SMNH), 209 to 228 (TALN…FMFY), 233 to 255 (VGVA…GGIF), and 267 to 286 (IGIW…LGNL).

Belongs to the GRP transporter (TC 2.A.7.5) family.

It localises to the cell membrane. Functionally, involved in the uptake of glucose. The protein is Probable glucose uptake protein GlcU (glcU) of Staphylococcus epidermidis (strain ATCC 35984 / DSM 28319 / BCRC 17069 / CCUG 31568 / BM 3577 / RP62A).